The chain runs to 477 residues: Histidine--tRNA ligase (477 aa).

It belongs to the class-II aminoacyl-tRNA synthetase family. Homodimer.

It is found in the cytoplasm. It catalyses the reaction tRNA(His) + L-histidine + ATP = L-histidyl-tRNA(His) + AMP + diphosphate + H(+). In Xanthomonas campestris pv. campestris (strain 8004), this protein is Histidine--tRNA ligase.